The primary structure comprises 836 residues: Tuftelin-interacting protein 11 (836 aa).

Over residues 1 to 13 the composition is skewed to basic and acidic residues; the sequence is MSLSHLYRDGEGH. Disordered regions lie at residues 1–31, 54–73, and 85–136; these read MSLS…DWDL, WAER…RARD, and LKKG…AGGT. Residues 1 to 50 are required for interaction with DHX15; that stretch reads MSLSHLYRDGEGHMDDDEDERENFEITDWDLQNEFNPNRQRHWQTKEEAT. Residue Ser2 is modified to Phosphoserine. A compositionally biased stretch (acidic residues) spans 14–28; the sequence is MDDDEDERENFEITD. Residues 54 to 64 are compositionally biased toward basic and acidic residues; that stretch reads WAERDSDEERP. Phosphoserine is present on residues Ser59 and Ser98. Acidic residues predominate over residues 91–102; sequence EEAELEDSDDEE. A compositionally biased stretch (basic and acidic residues) spans 103 to 116; sequence KPVKQDEFPKDFGP. Ser144 bears the Phosphoserine mark. In terms of domain architecture, G-patch spans 149–195; that stretch reads TKGIGQKLLQKMGYVPGRGLGKNAQGIINPIEAKQRKGKGAVGAYGS. A disordered region spans residues 183 to 236; the sequence is QRKGKGAVGAYGSERTTQSLQDFPVVDSEEEAEEEFQKELSQWRKDPSGSKKKP. At Ser210 the chain carries Phosphoserine. The span at 217 to 231 shows a compositional bias: basic and acidic residues; the sequence is EFQKELSQWRKDPSG. The Nuclear localization signal motif lies at 699–704; that stretch reads VKDKFN. The tract at residues 709–733 is required for nuclear speckle localization; that stretch reads IMNRAVSSNVGAYMQPGARENIAYL.

The protein belongs to the TFP11/STIP family. Identified in the spliceosome C complex. Found in the Intron Large (IL) complex, a post-mRNA release spliceosomal complex containing the excised intron, U2, U5 and U6 snRNPs, and splicing factors. Interacts with TUFT1. Interacts with DHX15; indicative for a recruitment of DHX15 to the IL complex. Interacts with GCFC2.

It is found in the cytoplasm. Its subcellular location is the nucleus. Involved in pre-mRNA splicing, specifically in spliceosome disassembly during late-stage splicing events. Intron turnover seems to proceed through reactions in two lariat-intron associated complexes termed Intron Large (IL) and Intron Small (IS). In cooperation with DHX15 seems to mediate the transition of the U2, U5 and U6 snRNP-containing IL complex to the snRNP-free IS complex leading to efficient debranching and turnover of excised introns. May play a role in the differentiation of ameloblasts and odontoblasts or in the forming of the enamel extracellular matrix. In Sus scrofa (Pig), this protein is Tuftelin-interacting protein 11 (TFIP11).